Here is a 447-residue protein sequence, read N- to C-terminus: BAG family molecular chaperone regulator 5 (447 aa).

5 BAG domains span residues 9–86 (SISR…EQNA), 95–167 (QNIF…ENCM), 182–260 (SVAK…DLEE), 275–350 (SILK…DLKE), and 365–442 (SHKA…DLKS).

Binds to the ATPase domain of HSP/HSP70 chaperones. Binds PRKN. Interacts complex with HSPA8 and JPH2.

Co-chaperone for HSP/HSP70 proteins. It functions as a nucleotide-exchange factor promoting the release of ADP from HSP70, thereby activating Hsp70-mediated protein refolding. Has an essential role in maintaining proteostasis at junctional membrane complexes (JMC), where it may function as a scaffold between the HSPA8 chaperone and JMC proteins enabling correct, HSPA8-dependent JMC protein folding. Inhibits both auto-ubiquitination of PRKN and ubiquitination of target proteins by PRKN. The sequence is that of BAG family molecular chaperone regulator 5 (BAG5) from Bos taurus (Bovine).